We begin with the raw amino-acid sequence, 648 residues long: Magnetosome protein MamZ (648 aa).

Positions 1 to 431 are major facilitator domain; that stretch reads MLEAWMPKSG…YAAWLLANGI (431 aa). 18 helical membrane-spanning segments follow: residues 28–49, 69–87, 94–113, 119–143, 163–182, 188–207, 252–273, 285–305, 317–335, 341–361, 373–395, 407–428, 449–468, 488–506, 518–538, 558–574, 595–612, and 618–634; these read IIYLLMTVGSLVAALSISIQPL, IQVVAEIVSIVCVGWFGLL, VRIIATGFLIAVAGAAMSLL, LAFGAAGLVLFYLTRVLLTVGADTV, LMGNLVFMMVFGGTMLSAII, YKGGVFIIMCLPLLIGIAGF, FYTRADVIILSLFFSLWCISVS, AHAAVMIGLLGLAVLAAIPLW, AIGASLSLAAVGYIWLGMF, WLVALPLLMVGIGHAGCFVTL, ILGAMVGAGYLVGGLGTVMLVQS, APFILMGTGKMLVTLYAAWLLA, PLVFLTAALPFVWLIGRSVI, YLGDWAFTFLIISLSMRPV, YRRMIGLFAFFYAVLHVLAYV, FILLGLAAFLLLIPLAF, ATYVINALVALHFILAAN, and PYVYAAAVIVLLWYRFY. The segment at 444 to 645 is ferric reductase-like domain, required for correct magnetite crystal formation; it reads KVDWKPLVFL…WRGGNVLRAL (202 aa).

The protein in the N-terminal section; belongs to the major facilitator superfamily. Probably interacts with FtsZ-like and MamY proteins.

The protein resides in the magnetosome membrane. In terms of biological role, required for correct biomineralization of the magnetosome; probably converts and then transports some form of iron. It is partially functionally redundant with MamH. May function with MamX, MamY amd Mms6 in biomineralization. Despite its strong similarity to MsrQ (AC V6EX82) this protein does not genetically interact with bona fide MsrP (AC V6F0A4), which is encoded elsewhere in the genome. The chain is Magnetosome protein MamZ from Magnetospirillum gryphiswaldense (strain DSM 6361 / JCM 21280 / NBRC 15271 / MSR-1).